Reading from the N-terminus, the 97-residue chain is UPF0213 protein BLi00048/BL00536 (97 aa).

One can recognise a GIY-YIG domain in the interval 4-79 (NSHYFYVLSC…KKLSRKNKER (76 aa)).

It belongs to the UPF0213 family.

The polypeptide is UPF0213 protein BLi00048/BL00536 (Bacillus licheniformis (strain ATCC 14580 / DSM 13 / JCM 2505 / CCUG 7422 / NBRC 12200 / NCIMB 9375 / NCTC 10341 / NRRL NRS-1264 / Gibson 46)).